The following is a 115-amino-acid chain: UPF0102 protein NMCC_2054 (115 aa).

This sequence belongs to the UPF0102 family.

This Neisseria meningitidis serogroup C (strain 053442) protein is UPF0102 protein NMCC_2054.